Consider the following 356-residue polypeptide: Dual-specificity RNA methyltransferase RlmN (356 aa).

The Proton acceptor role is filled by Glu89. The Radical SAM core domain maps to Ser108–Asp341. Cys115 and Cys346 are disulfide-bonded. [4Fe-4S] cluster-binding residues include Cys122, Cys126, and Cys129. S-adenosyl-L-methionine-binding positions include Gly172–Glu173, Ser204, Ser227–His229, and Asn303. Cys346 serves as the catalytic S-methylcysteine intermediate.

Belongs to the radical SAM superfamily. RlmN family. It depends on [4Fe-4S] cluster as a cofactor.

It is found in the cytoplasm. It catalyses the reaction adenosine(2503) in 23S rRNA + 2 reduced [2Fe-2S]-[ferredoxin] + 2 S-adenosyl-L-methionine = 2-methyladenosine(2503) in 23S rRNA + 5'-deoxyadenosine + L-methionine + 2 oxidized [2Fe-2S]-[ferredoxin] + S-adenosyl-L-homocysteine. It carries out the reaction adenosine(37) in tRNA + 2 reduced [2Fe-2S]-[ferredoxin] + 2 S-adenosyl-L-methionine = 2-methyladenosine(37) in tRNA + 5'-deoxyadenosine + L-methionine + 2 oxidized [2Fe-2S]-[ferredoxin] + S-adenosyl-L-homocysteine. Functionally, specifically methylates position 2 of adenine 2503 in 23S rRNA and position 2 of adenine 37 in tRNAs. m2A2503 modification seems to play a crucial role in the proofreading step occurring at the peptidyl transferase center and thus would serve to optimize ribosomal fidelity. This Campylobacter jejuni subsp. jejuni serotype O:2 (strain ATCC 700819 / NCTC 11168) protein is Dual-specificity RNA methyltransferase RlmN.